We begin with the raw amino-acid sequence, 166 residues long: Small ribosomal subunit protein uS5 (166 aa).

An S5 DRBM domain is found at 11–74 (LQEKLVQVNR…DQARRNMVKV (64 aa)).

This sequence belongs to the universal ribosomal protein uS5 family. Part of the 30S ribosomal subunit. Contacts proteins S4 and S8.

In terms of biological role, with S4 and S12 plays an important role in translational accuracy. Located at the back of the 30S subunit body where it stabilizes the conformation of the head with respect to the body. In Chromohalobacter salexigens (strain ATCC BAA-138 / DSM 3043 / CIP 106854 / NCIMB 13768 / 1H11), this protein is Small ribosomal subunit protein uS5.